The primary structure comprises 522 residues: 2-isopropylmalate synthase (522 aa).

The Pyruvate carboxyltransferase domain maps to 5-267 (VIIFDTTLRD…ETGINAKEIH (263 aa)). The Mn(2+) site is built by aspartate 14, histidine 202, histidine 204, and asparagine 238. The tract at residues 392 to 522 (QLQQLVVQSD…MQKNRELGGV (131 aa)) is regulatory domain.

This sequence belongs to the alpha-IPM synthase/homocitrate synthase family. LeuA type 1 subfamily. Homodimer. The cofactor is Mn(2+).

It localises to the cytoplasm. It carries out the reaction 3-methyl-2-oxobutanoate + acetyl-CoA + H2O = (2S)-2-isopropylmalate + CoA + H(+). The protein operates within amino-acid biosynthesis; L-leucine biosynthesis; L-leucine from 3-methyl-2-oxobutanoate: step 1/4. Functionally, catalyzes the condensation of the acetyl group of acetyl-CoA with 3-methyl-2-oxobutanoate (2-ketoisovalerate) to form 3-carboxy-3-hydroxy-4-methylpentanoate (2-isopropylmalate). In Shewanella baltica (strain OS155 / ATCC BAA-1091), this protein is 2-isopropylmalate synthase.